We begin with the raw amino-acid sequence, 230 residues long: MSEIKDIVVQGLWKNNSALVQLLGLCPLLAVTSTATNALGLGLATTLVLTLTNLTVSALRRWTPAEIRIPIYVMIIASVVSAVQMLINAYAFGLYQSLGIFIPLIVTNCIVVGRAEAFAAKKGPWLSALDGFSIGMGATGAMFVLGSLREILGNGTLFDGADSLLGGWAKVLRVEIFHTDSPFLLARLPPGAFIGLGLMLAVKYLIDEKMKKRRAETAPSAVPAGETGKV.

The next 6 membrane-spanning stretches (helical) occupy residues 18 to 38 (ALVQ…ATNA), 39 to 59 (LGLG…VSAL), 63 to 83 (TPAE…VSAV), 86 to 106 (LINA…PLIV), 125 to 145 (WLSA…MFVL), and 182 to 202 (PFLL…MLAV).

This sequence belongs to the NqrDE/RnfAE family. The complex is composed of six subunits: RsxA, RsxB, RsxC, RsxD, RsxE and RsxG.

It is found in the cell inner membrane. In terms of biological role, part of a membrane-bound complex that couples electron transfer with translocation of ions across the membrane. Required to maintain the reduced state of SoxR. The sequence is that of Ion-translocating oxidoreductase complex subunit E from Salmonella dublin (strain CT_02021853).